The following is a 559-amino-acid chain: Oxygen-dependent choline dehydrogenase (559 aa).

4–33 contacts FAD; that stretch reads DYIIIGAGSAGNVLAARLTEESDVSVLLLE. Residues 182 to 202 form a disordered region; it reads EGFGPMDRTVTPKGRRASTAR. Histidine 471 serves as the catalytic Proton acceptor.

The protein belongs to the GMC oxidoreductase family. FAD serves as cofactor.

The catalysed reaction is choline + A = betaine aldehyde + AH2. It carries out the reaction betaine aldehyde + NAD(+) + H2O = glycine betaine + NADH + 2 H(+). It functions in the pathway amine and polyamine biosynthesis; betaine biosynthesis via choline pathway; betaine aldehyde from choline (cytochrome c reductase route): step 1/1. Its function is as follows. Involved in the biosynthesis of the osmoprotectant glycine betaine. Catalyzes the oxidation of choline to betaine aldehyde and betaine aldehyde to glycine betaine at the same rate. The sequence is that of Oxygen-dependent choline dehydrogenase from Pectobacterium atrosepticum (strain SCRI 1043 / ATCC BAA-672) (Erwinia carotovora subsp. atroseptica).